A 244-amino-acid chain; its full sequence is Probable septum site-determining protein MinC (244 aa).

It belongs to the MinC family. Interacts with MinD and FtsZ.

Functionally, cell division inhibitor that blocks the formation of polar Z ring septums. Rapidly oscillates between the poles of the cell to destabilize FtsZ filaments that have formed before they mature into polar Z rings. Prevents FtsZ polymerization. The polypeptide is Probable septum site-determining protein MinC (Dichelobacter nodosus (strain VCS1703A)).